A 219-amino-acid chain; its full sequence is Cytidylate kinase (219 aa).

10–18 provides a ligand contact to ATP; that stretch reads GPAAAGKST.

Belongs to the cytidylate kinase family. Type 1 subfamily.

Its subcellular location is the cytoplasm. The enzyme catalyses CMP + ATP = CDP + ADP. It carries out the reaction dCMP + ATP = dCDP + ADP. The sequence is that of Cytidylate kinase from Staphylococcus aureus (strain JH9).